A 120-amino-acid chain; its full sequence is MFLLYEYDIFWAFLIISSLIPILAFFISGILAPIRKGPEKLSSYESGIEPMGDAWFQFRIRYYMFALVFVVFDVETVFLYPWAMSFDVLGLSVFLEAFVFVLILIVGLVYAWRKGALEWS.

3 helical membrane passes run 9–29 (IFWA…FISG), 64–84 (MFAL…PWAM), and 88–108 (VLGL…IVGL).

The protein belongs to the complex I subunit 3 family. NDH is composed of at least 16 different subunits, 5 of which are encoded in the nucleus.

The protein localises to the plastid. It is found in the chloroplast thylakoid membrane. It carries out the reaction a plastoquinone + NADH + (n+1) H(+)(in) = a plastoquinol + NAD(+) + n H(+)(out). The enzyme catalyses a plastoquinone + NADPH + (n+1) H(+)(in) = a plastoquinol + NADP(+) + n H(+)(out). Its function is as follows. NDH shuttles electrons from NAD(P)H:plastoquinone, via FMN and iron-sulfur (Fe-S) centers, to quinones in the photosynthetic chain and possibly in a chloroplast respiratory chain. The immediate electron acceptor for the enzyme in this species is believed to be plastoquinone. Couples the redox reaction to proton translocation, and thus conserves the redox energy in a proton gradient. The chain is NAD(P)H-quinone oxidoreductase subunit 3, chloroplastic from Jasminum nudiflorum (Winter jasmine).